Reading from the N-terminus, the 285-residue chain is NADPH-dependent 7-cyano-7-deazaguanine reductase (285 aa).

Residue 91-93 (IES) participates in substrate binding. 93-94 (SK) is an NADPH binding site. The active-site Thioimide intermediate is cysteine 193. Catalysis depends on aspartate 200, which acts as the Proton donor. 232 to 233 (HE) lines the substrate pocket. Position 261 to 262 (261 to 262 (RG)) interacts with NADPH.

It belongs to the GTP cyclohydrolase I family. QueF type 2 subfamily. As to quaternary structure, homodimer.

Its subcellular location is the cytoplasm. It catalyses the reaction 7-aminomethyl-7-carbaguanine + 2 NADP(+) = 7-cyano-7-deazaguanine + 2 NADPH + 3 H(+). It participates in tRNA modification; tRNA-queuosine biosynthesis. In terms of biological role, catalyzes the NADPH-dependent reduction of 7-cyano-7-deazaguanine (preQ0) to 7-aminomethyl-7-deazaguanine (preQ1). The polypeptide is NADPH-dependent 7-cyano-7-deazaguanine reductase (Shewanella baltica (strain OS223)).